The chain runs to 151 residues: Trivalent organoarsenical cleaving enzyme (151 aa).

The VOC domain maps to 2 to 118 (SRVQLALRVP…GGEPWEVYVV (117 aa)). Gln5 lines the Fe(2+) pocket. Asp61 provides a ligand contact to roxarsone (III). Fe(2+) is bound at residue His62. Residues Cys95 and Cys96 each contribute to the roxarsone (III) site. Glu114 is a Fe(2+) binding site.

As to quaternary structure, monomer. Requires Fe(2+) as cofactor.

The enzyme catalyses methylarsonous acid + AH2 + O2 = arsenite + methanol + A + H(+). It catalyses the reaction roxarsone (III) + AH2 + O2 = 4-hydroxy-3-nitrocyclohexa-2,5-dien-1-one + arsenite + A + H(+). It carries out the reaction nitarsone (III) + AH2 + O2 = 4-nitrocyclohexa-2,5-dien-1-one + arsenite + A + H(+). The catalysed reaction is 4-aminophenylarsonous acid + AH2 + O2 = 4-aminocyclohexa-2,5-dien-1-one + arsenite + A. Nonheme iron-dependent dioxygenase that can break carbon-arsenic bonds, playing a role in the detoxification of environmental organoarsenical compounds. Catalyzes the oxygen-dependent demethylation of highly toxic methylarsonous acid (MAs(III)) to arsenite, which can then be exported out of the cell. Can also cleave the C-As bond in several trivalent aromatic arsenicals, including roxarsone (III), nitarsone (III) and (4-aminophenyl)arsonous acid. Organoarsenical degradation by this enzyme is proposed to have a significant impact on the arsenic biogeocycle that maintains a balance between organic and inorganic species. The sequence is that of Trivalent organoarsenical cleaving enzyme from Thermomonospora curvata (strain ATCC 19995 / DSM 43183 / JCM 3096 / KCTC 9072 / NBRC 15933 / NCIMB 10081 / Henssen B9).